A 230-amino-acid chain; its full sequence is NADH-quinone oxidoreductase subunit 9 (230 aa).

4Fe-4S ferredoxin-type domains follow at residues 60-93 and 104-133; these read GRPV…MQAK and AWFE…MSKE. [4Fe-4S] cluster contacts are provided by Cys-73, Cys-76, Cys-79, Cys-83, Cys-113, Cys-116, Cys-119, and Cys-123.

The protein belongs to the complex I 23 kDa subunit family. In terms of assembly, NDH-1 is composed of 14 different subunits. Subunits Nqo7-14 constitute the membrane sector of the complex. It depends on [4Fe-4S] cluster as a cofactor.

It is found in the cell inner membrane. It catalyses the reaction a quinone + NADH + 5 H(+)(in) = a quinol + NAD(+) + 4 H(+)(out). Functionally, NDH-1 shuttles electrons from NADH, via FMN and iron-sulfur (Fe-S) centers, to quinones in the respiratory chain. The immediate electron acceptor for the enzyme in this species is believed to be menaquinone. Couples the redox reaction to proton translocation (for every two electrons transferred, four hydrogen ions are translocated across the cytoplasmic membrane), and thus conserves the redox energy in a proton gradient. The sequence is that of NADH-quinone oxidoreductase subunit 9 (nqo9) from Rhodothermus marinus (Rhodothermus obamensis).